Here is a 116-residue protein sequence, read N- to C-terminus: Methionine-R-sulfoxide reductase B1 (116 aa).

The MsrB domain occupies 1-106 (MSFCSFFGGE…FSSSLKFIPK (106 aa)). The Zn(2+) site is built by Cys23, Cys26, Cys71, and Cys74. The active-site Nucleophile is the Sec95. Residue Sec95 is a non-standard amino acid, selenocysteine.

The protein belongs to the MsrB Met sulfoxide reductase family. Zn(2+) serves as cofactor. Post-translationally, truncated MSRB1/SEPX1 proteins produced by failed UGA/Sec decoding are ubiquitinated by the CRL2(FEM1C) E3 ubiquitin-protein ligase complex.

It is found in the cytoplasm. It localises to the nucleus. Its subcellular location is the cytoskeleton. It catalyses the reaction L-methionyl-[protein] + [thioredoxin]-disulfide + H2O = L-methionyl-(R)-S-oxide-[protein] + [thioredoxin]-dithiol. The enzyme catalyses [thioredoxin]-disulfide + L-methionine + H2O = L-methionine (R)-S-oxide + [thioredoxin]-dithiol. Functionally, methionine-sulfoxide reductase that specifically reduces methionine (R)-sulfoxide back to methionine. While in many cases, methionine oxidation is the result of random oxidation following oxidative stress, methionine oxidation is also a post-translational modification that takes place on specific residue. Acts as a regulator of actin assembly by reducing methionine (R)-sulfoxide mediated by MICALs (MICAL1, MICAL2 or MICAL3) on actin, thereby promoting filament repolymerization. Plays a role in innate immunity by reducing oxidized actin, leading to actin repolymerization in macrophages. The protein is Methionine-R-sulfoxide reductase B1 (Msrb1) of Rattus norvegicus (Rat).